Reading from the N-terminus, the 290-residue chain is Phosphatidylglycerol--prolipoprotein diacylglyceryl transferase (290 aa).

7 consecutive transmembrane segments (helical) span residues 21-41, 60-80, 96-116, 130-150, 198-218, 225-245, and 258-278; these read VSLH…MWLA, LLYA…VLFY, WDGG…MFWF, FIAP…FING, SQLY…NLFI, GAVS…VEAF, and VISM…IMMI. Position 143 (Arg143) interacts with a 1,2-diacyl-sn-glycero-3-phospho-(1'-sn-glycerol).

The protein belongs to the Lgt family.

Its subcellular location is the cell inner membrane. The catalysed reaction is L-cysteinyl-[prolipoprotein] + a 1,2-diacyl-sn-glycero-3-phospho-(1'-sn-glycerol) = an S-1,2-diacyl-sn-glyceryl-L-cysteinyl-[prolipoprotein] + sn-glycerol 1-phosphate + H(+). Its pathway is protein modification; lipoprotein biosynthesis (diacylglyceryl transfer). Catalyzes the transfer of the diacylglyceryl group from phosphatidylglycerol to the sulfhydryl group of the N-terminal cysteine of a prolipoprotein, the first step in the formation of mature lipoproteins. The sequence is that of Phosphatidylglycerol--prolipoprotein diacylglyceryl transferase from Serratia proteamaculans (strain 568).